A 92-amino-acid chain; its full sequence is MAERLDPDVVLNHVLVPKHEVIDDEEEIEKILEELGVEKDDLPRIHTNDPVVVALSEKLGKRIKPGSLVKIVRDSPTAGKTVVYRVVTNPPE.

It belongs to the archaeal Rpo5/eukaryotic RPB5 RNA polymerase subunit family. In terms of assembly, part of the RNA polymerase complex.

Its subcellular location is the cytoplasm. The enzyme catalyses RNA(n) + a ribonucleoside 5'-triphosphate = RNA(n+1) + diphosphate. DNA-dependent RNA polymerase (RNAP) catalyzes the transcription of DNA into RNA using the four ribonucleoside triphosphates as substrates. This chain is DNA-directed RNA polymerase subunit Rpo5, found in Methanopyrus kandleri (strain AV19 / DSM 6324 / JCM 9639 / NBRC 100938).